Reading from the N-terminus, the 882-residue chain is DNA mismatch repair protein MutS (882 aa).

G629–S636 is a binding site for ATP.

The protein belongs to the DNA mismatch repair MutS family.

In terms of biological role, this protein is involved in the repair of mismatches in DNA. It is possible that it carries out the mismatch recognition step. This protein has a weak ATPase activity. This Ralstonia pickettii (strain 12J) protein is DNA mismatch repair protein MutS.